Consider the following 275-residue polypeptide: WIMGHMVNAVPQIDQFVNLGSNALEMDVTFNKDAMPVYTYHGTPCDCLRDCLRWEHFPVFLQELRKATSPGDAKYHEKLVLLLFDLKTGKINNNQANTAGQNVAKQLLQHYWNYGNNGGRAYVILSIPYVEHYELIRGFRETLKKEGHENLMEKVGYDFSGRHKLDTVREAYKKAGVDGHVWQSDGITNCLPLVDDLPRVREAVRNRDSPDGFINKVYYWTVDKVATTKKALGAGVDGVMTNHPDVIVNVLNESGYNDKYRLATYDDNPWETFRN.

H5 is a catalytic residue. Residues E25 and D27 each contribute to the Mg(2+) site. The active-site Nucleophile is H41. 2 disulfides stabilise this stretch: C45–C51 and C47–C190. D85 lines the Mg(2+) pocket. Residue N252 is glycosylated (N-linked (GlcNAc...) asparagine).

The protein belongs to the arthropod phospholipase D family. Class II subfamily. Mg(2+) is required as a cofactor. In terms of tissue distribution, expressed by the venom gland.

Its subcellular location is the secreted. The catalysed reaction is an N-(acyl)-sphingosylphosphocholine = an N-(acyl)-sphingosyl-1,3-cyclic phosphate + choline. It catalyses the reaction an N-(acyl)-sphingosylphosphoethanolamine = an N-(acyl)-sphingosyl-1,3-cyclic phosphate + ethanolamine. The enzyme catalyses a 1-acyl-sn-glycero-3-phosphocholine = a 1-acyl-sn-glycero-2,3-cyclic phosphate + choline. It carries out the reaction a 1-acyl-sn-glycero-3-phosphoethanolamine = a 1-acyl-sn-glycero-2,3-cyclic phosphate + ethanolamine. Dermonecrotic toxins cleave the phosphodiester linkage between the phosphate and headgroup of certain phospholipids (sphingolipid and lysolipid substrates), forming an alcohol (often choline) and a cyclic phosphate. This toxin acts on sphingomyelin (SM). It may also act on ceramide phosphoethanolamine (CPE), lysophosphatidylcholine (LPC) and lysophosphatidylethanolamine (LPE), but not on lysophosphatidylserine (LPS), and lysophosphatidylglycerol (LPG). It acts by transphosphatidylation, releasing exclusively cyclic phosphate products as second products. Induces dermonecrosis, hemolysis, increased vascular permeability, edema, inflammatory response, and platelet aggregation. The sequence is that of Dermonecrotic toxin LarSicTox-alphaIII1 from Loxosceles arizonica (Arizona brown spider).